Reading from the N-terminus, the 372-residue chain is Protein RecA (372 aa).

81–88 (GPESSGKT) serves as a coordination point for ATP.

It belongs to the RecA family.

Its subcellular location is the cytoplasm. Its function is as follows. Can catalyze the hydrolysis of ATP in the presence of single-stranded DNA, the ATP-dependent uptake of single-stranded DNA by duplex DNA, and the ATP-dependent hybridization of homologous single-stranded DNAs. It interacts with LexA causing its activation and leading to its autocatalytic cleavage. The chain is Protein RecA from Haemophilus ducreyi (strain 35000HP / ATCC 700724).